The following is a 20-amino-acid chain: Superoxide dismutase [Mn], mitochondrial (20 aa).

Belongs to the iron/manganese superoxide dismutase family. Homotetramer. The cofactor is Mn(2+).

The protein resides in the mitochondrion matrix. The enzyme catalyses 2 superoxide + 2 H(+) = H2O2 + O2. Destroys superoxide anion radicals which are normally produced within the cells and which are toxic to biological systems. The sequence is that of Superoxide dismutase [Mn], mitochondrial (SODA) from Hordeum vulgare (Barley).